A 130-amino-acid polypeptide reads, in one-letter code: Ribonuclease P protein component 2 (130 aa).

It belongs to the eukaryotic/archaeal RNase P protein component 2 family. In terms of assembly, consists of a catalytic RNA component and at least 5 protein subunits.

The protein localises to the cytoplasm. It catalyses the reaction Endonucleolytic cleavage of RNA, removing 5'-extranucleotides from tRNA precursor.. Its function is as follows. Part of ribonuclease P, a protein complex that generates mature tRNA molecules by cleaving their 5'-ends. The chain is Ribonuclease P protein component 2 from Methanococcus maripaludis (strain DSM 14266 / JCM 13030 / NBRC 101832 / S2 / LL).